The sequence spans 510 residues: Light-independent protochlorophyllide reductase subunit B (510 aa).

Residue D36 participates in [4Fe-4S] cluster binding. Catalysis depends on D296, which acts as the Proton donor. Residue 431 to 432 coordinates substrate; it reads GM.

This sequence belongs to the ChlB/BchB/BchZ family. In terms of assembly, protochlorophyllide reductase is composed of three subunits; ChlL, ChlN and ChlB. Forms a heterotetramer of two ChlB and two ChlN subunits. The cofactor is [4Fe-4S] cluster.

It catalyses the reaction chlorophyllide a + oxidized 2[4Fe-4S]-[ferredoxin] + 2 ADP + 2 phosphate = protochlorophyllide a + reduced 2[4Fe-4S]-[ferredoxin] + 2 ATP + 2 H2O. It participates in porphyrin-containing compound metabolism; chlorophyll biosynthesis (light-independent). In terms of biological role, component of the dark-operative protochlorophyllide reductase (DPOR) that uses Mg-ATP and reduced ferredoxin to reduce ring D of protochlorophyllide (Pchlide) to form chlorophyllide a (Chlide). This reaction is light-independent. The NB-protein (ChlN-ChlB) is the catalytic component of the complex. This chain is Light-independent protochlorophyllide reductase subunit B, found in Synechococcus sp. (strain JA-2-3B'a(2-13)) (Cyanobacteria bacterium Yellowstone B-Prime).